The chain runs to 208 residues: Small ribosomal subunit protein uS4 (208 aa).

In terms of domain architecture, S4 RNA-binding spans 98-163 (QRLDNVVYRM…NPQITRAIEL (66 aa)).

The protein belongs to the universal ribosomal protein uS4 family. Part of the 30S ribosomal subunit. Contacts protein S5. The interaction surface between S4 and S5 is involved in control of translational fidelity.

Functionally, one of the primary rRNA binding proteins, it binds directly to 16S rRNA where it nucleates assembly of the body of the 30S subunit. In terms of biological role, with S5 and S12 plays an important role in translational accuracy. The protein is Small ribosomal subunit protein uS4 of Campylobacter jejuni subsp. jejuni serotype O:6 (strain 81116 / NCTC 11828).